The chain runs to 700 residues: Hedgehog-interacting protein (700 aa).

Positions 1-17 (MLKMLSFKLLLLAVALG) are cleaved as a signal peptide. The N-linked (GlcNAc...) asparagine glycan is linked to Asn99. Intrachain disulfides connect Cys216-Cys536, Cys218-Cys543, Cys402-Cys624, Cys435-Cys452, Cys500-Cys594, Cys608-Cys617, Cys612-Cys623, Cys625-Cys634, Cys639-Cys649, Cys643-Cys655, and Cys657-Cys666. Positions 376–388 (LDDMEEMDGLSDF) are interaction with SHH zinc binding site. Asp383 provides a ligand contact to Zn(2+). N-linked (GlcNAc...) asparagine glycosylation is found at Asn416, Asn447, and Asn459. 2 EGF-like domains span residues 607 to 634 (ECSR…GDFC) and 635 to 667 (RTAK…PQCE).

This sequence belongs to the HHIP family. In terms of assembly, interacts with all three hedgehog family members, SHH, IHH and DHH. Widely expressed in fetal and adult tissues. Highest expression in adult heart, liver and pancreas, and in fetal kidney.

It localises to the cell membrane. Its subcellular location is the secreted. The protein resides in the cytoplasm. In terms of biological role, modulates hedgehog signaling in several cell types including brain and lung through direct interaction with members of the hedgehog family. The chain is Hedgehog-interacting protein (HHIP) from Homo sapiens (Human).